Here is a 663-residue protein sequence, read N- to C-terminus: DNA ligase (663 aa).

NAD(+) contacts are provided by residues 33–37, 82–83, and glutamate 112; these read DYSYD and SI. The N6-AMP-lysine intermediate role is filled by lysine 114. NAD(+) is bound by residues arginine 135, glutamate 171, lysine 285, and lysine 309. Zn(2+) contacts are provided by cysteine 403, cysteine 406, cysteine 419, and cysteine 424. One can recognise a BRCT domain in the interval 581–663; it reads DKEAPLQGKV…SRILDAKSVS (83 aa).

It belongs to the NAD-dependent DNA ligase family. LigA subfamily. Requires Mg(2+) as cofactor. Mn(2+) is required as a cofactor.

The enzyme catalyses NAD(+) + (deoxyribonucleotide)n-3'-hydroxyl + 5'-phospho-(deoxyribonucleotide)m = (deoxyribonucleotide)n+m + AMP + beta-nicotinamide D-nucleotide.. DNA ligase that catalyzes the formation of phosphodiester linkages between 5'-phosphoryl and 3'-hydroxyl groups in double-stranded DNA using NAD as a coenzyme and as the energy source for the reaction. It is essential for DNA replication and repair of damaged DNA. This is DNA ligase from Chlamydia trachomatis serovar L2 (strain ATCC VR-902B / DSM 19102 / 434/Bu).